A 364-amino-acid chain; its full sequence is Histidinol-phosphate aminotransferase BQ2027_MB2256C (364 aa).

At K220 the chain carries N6-(pyridoxal phosphate)lysine.

Belongs to the class-I pyridoxal-phosphate-dependent aminotransferase family. In terms of assembly, monomer. It depends on pyridoxal 5'-phosphate as a cofactor.

Its subcellular location is the secreted. The protein localises to the cell wall. It carries out the reaction L-histidinol phosphate + 2-oxoglutarate = 3-(imidazol-4-yl)-2-oxopropyl phosphate + L-glutamate. Its function is as follows. Aminotransferase that catalyzes the conversion of histidinol phosphate and 2-oxoglutarate into L-glutamate and imidazole acetol phosphate. Might play a significant role in mediating histidine biosynthesis during infection. Facilitates mycobacterial survival and virulence in macrophages. This Mycobacterium bovis (strain ATCC BAA-935 / AF2122/97) protein is Histidinol-phosphate aminotransferase BQ2027_MB2256C.